We begin with the raw amino-acid sequence, 603 residues long: Phosphoenolpyruvate carboxykinase [GTP] (603 aa).

Residues Arg-87 and 209 to 211 each bind substrate; that span reads YAG. Residues Lys-218 and His-237 each coordinate Mn(2+). Ser-258 is a substrate binding site. Residue 259-264 coordinates GTP; that stretch reads GSGKTS. The active site involves Ser-260. Asp-275 contacts Mn(2+). 365-367 is a binding site for substrate; it reads NAR. GTP contacts are provided by Arg-367 and Arg-398.

This sequence belongs to the phosphoenolpyruvate carboxykinase [GTP] family. It depends on Mn(2+) as a cofactor.

The protein resides in the cytoplasm. It catalyses the reaction oxaloacetate + GTP = phosphoenolpyruvate + GDP + CO2. The protein operates within carbohydrate biosynthesis; gluconeogenesis. Functionally, catalyzes the conversion of oxaloacetate (OAA) to phosphoenolpyruvate (PEP), the rate-limiting step in the metabolic pathway that produces glucose from lactate and other precursors derived from the citric acid cycle. This chain is Phosphoenolpyruvate carboxykinase [GTP], found in Saccharolobus solfataricus (strain ATCC 35092 / DSM 1617 / JCM 11322 / P2) (Sulfolobus solfataricus).